The sequence spans 122 residues: Large ribosomal subunit protein uL14 (122 aa).

The protein belongs to the universal ribosomal protein uL14 family. As to quaternary structure, part of the 50S ribosomal subunit. Forms a cluster with proteins L3 and L19. In the 70S ribosome, L14 and L19 interact and together make contacts with the 16S rRNA in bridges B5 and B8.

Functionally, binds to 23S rRNA. Forms part of two intersubunit bridges in the 70S ribosome. The chain is Large ribosomal subunit protein uL14 from Rhodopirellula baltica (strain DSM 10527 / NCIMB 13988 / SH1).